A 230-amino-acid polypeptide reads, in one-letter code: UPF0500 protein C1orf216 homolog (230 aa).

The disordered stretch occupies residues methionine 1–serine 103. Residues arginine 60–glutamine 73 are compositionally biased toward polar residues. The segment covering proline 85–alanine 94 has biased composition (low complexity).

This sequence belongs to the UPF0500 family.

The sequence is that of UPF0500 protein C1orf216 homolog from Mus musculus (Mouse).